The primary structure comprises 182 residues: R-phycoerythrin subunit beta (182 aa).

Cysteine 82 is a binding site for (2R,3E)-phycoerythrobilin.

This sequence belongs to the phycobiliprotein family. Homodimer. In terms of processing, contains one covalently linked phycoerythrobilin chromophore.

Functionally, green-light absorbing phycoerythrin of unknown function. The sequence is that of R-phycoerythrin subunit beta (cpeB) from Prochlorococcus marinus (strain SARG / CCMP1375 / SS120).